A 72-amino-acid polypeptide reads, in one-letter code: uncharacterized protein (72 aa).

This is an uncharacterized protein from Vertebrata (FPV).